Consider the following 306-residue polypeptide: Probable histidinol-phosphatase (306 aa).

The protein belongs to the PHP hydrolase family. HisK subfamily.

It catalyses the reaction L-histidinol phosphate + H2O = L-histidinol + phosphate. The protein operates within amino-acid biosynthesis; L-histidine biosynthesis; L-histidine from 5-phospho-alpha-D-ribose 1-diphosphate: step 8/9. The chain is Probable histidinol-phosphatase from Schizosaccharomyces pombe (strain 972 / ATCC 24843) (Fission yeast).